Reading from the N-terminus, the 622-residue chain is Iron transport multicopper oxidase FET5 (622 aa).

The first 18 residues, 1–18, serve as a signal peptide directing secretion; sequence MLFYSFVWSVLAASVALA. The Extracellular portion of the chain corresponds to 19–573; the sequence is KTHKLNYTAS…PKGFTTEGYL (555 aa). Residue Asn24 is glycosylated (N-linked (GlcNAc...) asparagine). 2 consecutive Plastocyanin-like domains span residues 43–146 and 192–301; these read IGFN…FIIH and NILF…IQMR. The Cu cation site is built by His79 and His81. N-linked (GlcNAc...) asparagine glycosylation is found at Asn86 and Asn115. Cu cation contacts are provided by His128 and His130. 5 N-linked (GlcNAc...) asparagine glycosylation sites follow: Asn196, Asn200, Asn246, Asn295, and Asn364. The Plastocyanin-like 3 domain maps to 392-514; that stretch reads GDNINAQLLK…QGLASVFIEA (123 aa). Cu cation contacts are provided by His418, His421, and His423. A glycan (N-linked (GlcNAc...) asparagine) is linked at Asn455. Cu cation contacts are provided by His496, Cys497, His498, and His502. The helical transmembrane segment at 574-594 threads the bilayer; sequence ALIISTIIGVWGLYSIAQYGI. Topologically, residues 595 to 622 are cytoplasmic; it reads GEVIPNDEKVYHTLREILAENEIEVSRG.

This sequence belongs to the multicopper oxidase family. As to quaternary structure, interacts with FTH1. Cu cation serves as cofactor.

It localises to the cell membrane. Functionally, iron transport multicopper oxidase, which is required for Fe(2+) high affinity uptake. May be required to oxidize Fe(2+) and release it from the transporter. Essential component of copper-dependent iron transport. The sequence is that of Iron transport multicopper oxidase FET5 (FET5) from Saccharomyces cerevisiae (strain ATCC 204508 / S288c) (Baker's yeast).